We begin with the raw amino-acid sequence, 86 residues long: MYCIELTIKLSPMPLVVQRKEHGEAKRLYSDVVESIKNGNPRLLELTCEKVEDKRITVLVSEITAVQIYEKTSSSTSKRPGFSLQN.

It belongs to the UPF0367 family.

This chain is UPF0367 protein NATL1_01981, found in Prochlorococcus marinus (strain NATL1A).